The primary structure comprises 512 residues: Serine/threonine-protein kinase grp (512 aa).

The Protein kinase domain maps to 22 to 279; that stretch reads WTLAQTLGEG…LEKTLDHKWC (258 aa). ATP is bound by residues 28 to 36 and K51; that span reads LGEGAYGEV. D143 functions as the Proton acceptor in the catalytic mechanism. Residues 335–360 form a disordered region; it reads PTMRSDDDFNVRLGSGRSKEDGGDRQ.

This sequence belongs to the protein kinase superfamily. CAMK Ser/Thr protein kinase family. NIM1 subfamily. Phosphorylated in a MEI-41/ATR dependent manner in response to DNA damage or the presence of unreplicated DNA.

Its subcellular location is the nucleus. The catalysed reaction is L-seryl-[protein] + ATP = O-phospho-L-seryl-[protein] + ADP + H(+). It catalyses the reaction L-threonyl-[protein] + ATP = O-phospho-L-threonyl-[protein] + ADP + H(+). Functionally, serine/threonine-protein kinase which is required for checkpoint-mediated cell cycle arrest and activation of DNA repair in response to the presence of DNA damage or unreplicated DNA. May also negatively regulate cell cycle progression during unperturbed cell cycles. May phosphorylate the CDC25 phosphatase stg, which promotes its degradation. This results in increased inhibitory tyrosine phosphorylation of Cdk1-cyclin complexes and consequent inhibition of cell cycle progression. The sequence is that of Serine/threonine-protein kinase grp from Drosophila melanogaster (Fruit fly).